The following is a 369-amino-acid chain: DNA replication and repair protein RecF (369 aa).

30–37 serves as a coordination point for ATP; it reads GENAQGKT.

The protein belongs to the RecF family.

The protein resides in the cytoplasm. Its function is as follows. The RecF protein is involved in DNA metabolism; it is required for DNA replication and normal SOS inducibility. RecF binds preferentially to single-stranded, linear DNA. It also seems to bind ATP. This is DNA replication and repair protein RecF from Oceanobacillus iheyensis (strain DSM 14371 / CIP 107618 / JCM 11309 / KCTC 3954 / HTE831).